Here is a 383-residue protein sequence, read N- to C-terminus: Succinyl-diaminopimelate desuccinylase (383 aa).

Residue histidine 73 participates in Zn(2+) binding. The active site involves aspartate 75. Residue aspartate 107 participates in Zn(2+) binding. The Proton acceptor role is filled by glutamate 141. Zn(2+) is bound by residues glutamate 142, glutamate 170, and histidine 356.

This sequence belongs to the peptidase M20A family. DapE subfamily. In terms of assembly, homodimer. Zn(2+) serves as cofactor. Co(2+) is required as a cofactor.

The catalysed reaction is N-succinyl-(2S,6S)-2,6-diaminopimelate + H2O = (2S,6S)-2,6-diaminopimelate + succinate. It functions in the pathway amino-acid biosynthesis; L-lysine biosynthesis via DAP pathway; LL-2,6-diaminopimelate from (S)-tetrahydrodipicolinate (succinylase route): step 3/3. Catalyzes the hydrolysis of N-succinyl-L,L-diaminopimelic acid (SDAP), forming succinate and LL-2,6-diaminopimelate (DAP), an intermediate involved in the bacterial biosynthesis of lysine and meso-diaminopimelic acid, an essential component of bacterial cell walls. This chain is Succinyl-diaminopimelate desuccinylase, found in Pseudomonas entomophila (strain L48).